The primary structure comprises 270 residues: Myeloid leukemia factor 1 (270 aa).

Ser-6, Ser-8, Ser-32, and Ser-34 each carry phosphoserine. The interval 50 to 125 (RARNRMGHED…VGDEPPKVFQ (76 aa)) is interaction with COPS3. Disordered regions lie at residues 127-148 (STQT…RDSD) and 221-247 (RSVA…AIEH). Basic and acidic residues predominate over residues 138 to 148 (KETRKALRDSD).

This sequence belongs to the MLF family. In terms of assembly, interacts with CENPU. Also interacts with NRBP1/MADM, YWHAZ/14-3-3-zeta and HNRPUL2/MANP. NRBP1 recruits a serine kinase which phosphorylates both itself and MLF1. Phosphorylated MLF1 then binds to YWHAZ and is retained in the cytoplasm. Retained in the nucleus by binding to HNRPUL2. Binds to COPS3/CSN3 which is required for suppression of COP1 and activation of p53. Phosphorylation is required for binding to YWHAZ.

Its subcellular location is the cytoplasm. It localises to the nucleus. It is found in the cell projection. The protein resides in the cilium. The protein localises to the cytoskeleton. Its subcellular location is the cilium basal body. In terms of biological role, involved in lineage commitment of primary hemopoietic progenitors by restricting erythroid formation and enhancing myeloid formation. Interferes with erythropoietin-induced erythroid terminal differentiation by preventing cells from exiting the cell cycle through suppression of CDKN1B/p27Kip1 levels. Suppresses COP1 activity via CSN3 which activates p53 and induces cell cycle arrest. Binds DNA and affects the expression of a number of genes so may function as a transcription factor in the nucleus. This is Myeloid leukemia factor 1 (MLF1) from Bos taurus (Bovine).